A 158-amino-acid polypeptide reads, in one-letter code: Anti-tumor lectin (158 aa).

Glutamine 1 is modified (blocked amino end (Gln)). Positions 12–155 (TSVDLAAPVT…STVVEAVTYT (144 aa)) constitute a Galectin domain. 7 residues coordinate N-acetyl-alpha-neuraminyl-(2-&gt;3)-beta-D-galactosyl-(1-&gt;4)-beta-D-glucose: asparagine 43, histidine 59, arginine 63, asparagine 72, arginine 74, tryptophan 80, and glutamate 83.

As to quaternary structure, homodimer. As to expression, detected in the fruiting body.

Its function is as follows. Anti-tumor lectin with DNase activity. Inhibits the growth of several tumor cell lines in vitro. Induces lymphocyte infiltration and necrosis of tumor cells in a mouse tumor model. Induces apoptosis in HeLa cells. Binds N-acetylneuraminyl lactose (N-acetyl-alpha-neuraminyl-(2-&gt;3)-beta-D-galactosyl-(1-&gt;4)-beta-D-glucose). The protein is Anti-tumor lectin of Cyclocybe aegerita (Black poplar mushroom).